The sequence spans 511 residues: 2-isopropylmalate synthase (511 aa).

The Pyruvate carboxyltransferase domain occupies 6–269; that stretch reads IIIFDTTLRD…YTDIKCENIS (264 aa). Mn(2+)-binding residues include Asp-15, His-203, His-205, and Asn-239. The tract at residues 394–511 is regulatory domain; sequence VLEKLSVISG…SLKVEERKMA (118 aa).

The protein belongs to the alpha-IPM synthase/homocitrate synthase family. LeuA type 1 subfamily. Homodimer. It depends on Mn(2+) as a cofactor.

The protein localises to the cytoplasm. It catalyses the reaction 3-methyl-2-oxobutanoate + acetyl-CoA + H2O = (2S)-2-isopropylmalate + CoA + H(+). Its pathway is amino-acid biosynthesis; L-leucine biosynthesis; L-leucine from 3-methyl-2-oxobutanoate: step 1/4. Functionally, catalyzes the condensation of the acetyl group of acetyl-CoA with 3-methyl-2-oxobutanoate (2-ketoisovalerate) to form 3-carboxy-3-hydroxy-4-methylpentanoate (2-isopropylmalate). The sequence is that of 2-isopropylmalate synthase from Campylobacter jejuni subsp. doylei (strain ATCC BAA-1458 / RM4099 / 269.97).